We begin with the raw amino-acid sequence, 326 residues long: Diaminopimelate epimerase (326 aa).

Positions 13 and 72 each coordinate substrate. The Proton donor role is filled by Cys81. Residues 82–83 (GN), Asn169, Asn205, and 223–224 (ER) each bind substrate. Residue Cys232 is the Proton acceptor of the active site. A substrate-binding site is contributed by 233–234 (GT).

It belongs to the diaminopimelate epimerase family. As to quaternary structure, homodimer.

It is found in the cytoplasm. It carries out the reaction (2S,6S)-2,6-diaminopimelate = meso-2,6-diaminopimelate. The protein operates within amino-acid biosynthesis; L-lysine biosynthesis via DAP pathway; DL-2,6-diaminopimelate from LL-2,6-diaminopimelate: step 1/1. Functionally, catalyzes the stereoinversion of LL-2,6-diaminopimelate (L,L-DAP) to meso-diaminopimelate (meso-DAP), a precursor of L-lysine and an essential component of the bacterial peptidoglycan. The sequence is that of Diaminopimelate epimerase from Enterococcus faecalis (strain ATCC 700802 / V583).